The primary structure comprises 608 residues: MDYRALGLKVGLEIHIQLNTRRKLFCHCPPVLRDDEPHFRLERRLHISLSELGAVDPAVVWEVRKRRRYVYEGYRDTTCLVELDEEPPHLPDEEALVTALGVAKMFNAKPFDELHVMRKIVVDGSNVSGFQRTVLVAYGGRAKILGYDIGVETIALEEDAARKMGEEGKAVIYRLDRLGIPLIEIATEPMSYSPQQVEEVAWIIGYSVKITGRAKRGVGTVRQDVNVSIAGGAKTEIKGVPDLSLIPKVIEYEAQRQVNLLKIAEELKKRGVASVELSTVDVTDVFSNTKSKLVKRVLEAGGRVVAVKAPGFRKLLGFEVQPGRRFGTELADYVRAWTELGGLLHSDELPGYGISADEVRAVEQRVGVDSYVLLMGVEAAELEEAARVVVDRLNAALRGVPEETRGANPDGTTRFLRPRPGAARMYPETDLPPIKVTFELLKRAEEVAKVSLEGKIAELTSMGLSKDLALRLVKSPHLEKFEEFVARFKSLPPQLIASIMLNTAKALAREGVEVSEEKLASVFEALENKVITKEAVEDVLRAMKPGESAAEVAKRLGLVRLPFEEVRKIVEEVAKEVGREKALGEVMRRYRGRVDAEDVRRALSELHF.

The tract at residues 402 to 422 (EETRGANPDGTTRFLRPRPGA) is disordered.

It belongs to the GatB/GatE family. GatE subfamily. Heterodimer of GatD and GatE.

It carries out the reaction L-glutamyl-tRNA(Gln) + L-glutamine + ATP + H2O = L-glutaminyl-tRNA(Gln) + L-glutamate + ADP + phosphate + H(+). In terms of biological role, allows the formation of correctly charged Gln-tRNA(Gln) through the transamidation of misacylated Glu-tRNA(Gln) in organisms which lack glutaminyl-tRNA synthetase. The reaction takes place in the presence of glutamine and ATP through an activated gamma-phospho-Glu-tRNA(Gln). The GatDE system is specific for glutamate and does not act on aspartate. The chain is Glutamyl-tRNA(Gln) amidotransferase subunit E from Pyrobaculum calidifontis (strain DSM 21063 / JCM 11548 / VA1).